The following is a 553-amino-acid chain: Arginine--tRNA ligase (553 aa).

The 'HIGH' region signature appears at 130–140 (ANPTGDLHIGH).

Belongs to the class-I aminoacyl-tRNA synthetase family. As to quaternary structure, monomer.

Its subcellular location is the cytoplasm. The catalysed reaction is tRNA(Arg) + L-arginine + ATP = L-arginyl-tRNA(Arg) + AMP + diphosphate. This chain is Arginine--tRNA ligase, found in Staphylococcus aureus (strain USA300 / TCH1516).